Here is a 276-residue protein sequence, read N- to C-terminus: 2,3,4,5-tetrahydropyridine-2,6-dicarboxylate N-succinyltransferase (276 aa).

Residues Arg104 and Asp141 each coordinate substrate.

This sequence belongs to the transferase hexapeptide repeat family. In terms of assembly, homotrimer.

Its subcellular location is the cytoplasm. The enzyme catalyses (S)-2,3,4,5-tetrahydrodipicolinate + succinyl-CoA + H2O = (S)-2-succinylamino-6-oxoheptanedioate + CoA. It functions in the pathway amino-acid biosynthesis; L-lysine biosynthesis via DAP pathway; LL-2,6-diaminopimelate from (S)-tetrahydrodipicolinate (succinylase route): step 1/3. This Pseudoalteromonas translucida (strain TAC 125) protein is 2,3,4,5-tetrahydropyridine-2,6-dicarboxylate N-succinyltransferase.